A 265-amino-acid polypeptide reads, in one-letter code: Tryptophan synthase alpha chain (265 aa).

Residues Glu-49 and Asp-60 each act as proton acceptor in the active site.

Belongs to the TrpA family. As to quaternary structure, tetramer of two alpha and two beta chains.

The catalysed reaction is (1S,2R)-1-C-(indol-3-yl)glycerol 3-phosphate + L-serine = D-glyceraldehyde 3-phosphate + L-tryptophan + H2O. It participates in amino-acid biosynthesis; L-tryptophan biosynthesis; L-tryptophan from chorismate: step 5/5. Its function is as follows. The alpha subunit is responsible for the aldol cleavage of indoleglycerol phosphate to indole and glyceraldehyde 3-phosphate. This chain is Tryptophan synthase alpha chain, found in Polynucleobacter asymbioticus (strain DSM 18221 / CIP 109841 / QLW-P1DMWA-1) (Polynucleobacter necessarius subsp. asymbioticus).